The sequence spans 493 residues: Protein nucleotidyltransferase YdiU (493 aa).

G81, G83, R84, K103, D115, G116, R166, and R173 together coordinate ATP. The Proton acceptor role is filled by D244. N245 and D254 together coordinate Mg(2+). D254 lines the ATP pocket.

It belongs to the SELO family. The cofactor is Mg(2+). It depends on Mn(2+) as a cofactor.

The enzyme catalyses L-seryl-[protein] + ATP = 3-O-(5'-adenylyl)-L-seryl-[protein] + diphosphate. It carries out the reaction L-threonyl-[protein] + ATP = 3-O-(5'-adenylyl)-L-threonyl-[protein] + diphosphate. It catalyses the reaction L-tyrosyl-[protein] + ATP = O-(5'-adenylyl)-L-tyrosyl-[protein] + diphosphate. The catalysed reaction is L-histidyl-[protein] + UTP = N(tele)-(5'-uridylyl)-L-histidyl-[protein] + diphosphate. The enzyme catalyses L-seryl-[protein] + UTP = O-(5'-uridylyl)-L-seryl-[protein] + diphosphate. It carries out the reaction L-tyrosyl-[protein] + UTP = O-(5'-uridylyl)-L-tyrosyl-[protein] + diphosphate. Functionally, nucleotidyltransferase involved in the post-translational modification of proteins. It can catalyze the addition of adenosine monophosphate (AMP) or uridine monophosphate (UMP) to a protein, resulting in modifications known as AMPylation and UMPylation. This is Protein nucleotidyltransferase YdiU from Shewanella frigidimarina (strain NCIMB 400).